The primary structure comprises 455 residues: Argininosuccinate lyase (455 aa).

It belongs to the lyase 1 family. Argininosuccinate lyase subfamily.

It is found in the cytoplasm. The catalysed reaction is 2-(N(omega)-L-arginino)succinate = fumarate + L-arginine. The protein operates within amino-acid biosynthesis; L-arginine biosynthesis; L-arginine from L-ornithine and carbamoyl phosphate: step 3/3. The polypeptide is Argininosuccinate lyase (Shewanella sp. (strain ANA-3)).